Reading from the N-terminus, the 157-residue chain is Arginine repressor (157 aa).

The protein belongs to the ArgR family.

Its subcellular location is the cytoplasm. It functions in the pathway amino-acid biosynthesis; L-arginine biosynthesis [regulation]. In terms of biological role, regulates arginine biosynthesis genes. This is Arginine repressor from Deinococcus radiodurans (strain ATCC 13939 / DSM 20539 / JCM 16871 / CCUG 27074 / LMG 4051 / NBRC 15346 / NCIMB 9279 / VKM B-1422 / R1).